Consider the following 475-residue polypeptide: Ribulose bisphosphate carboxylase large chain (475 aa).

Residues 1 to 2 (MS) constitute a propeptide that is removed on maturation. Pro3 is subject to N-acetylproline. The residue at position 14 (Lys14) is an N6,N6,N6-trimethyllysine. The substrate site is built by Asn123 and Thr173. The active-site Proton acceptor is Lys175. Lys177 contacts substrate. 3 residues coordinate Mg(2+): Lys201, Asp203, and Glu204. An N6-carboxylysine modification is found at Lys201. His294 functions as the Proton acceptor in the catalytic mechanism. Substrate is bound by residues Arg295, His327, and Ser379.

This sequence belongs to the RuBisCO large chain family. Type I subfamily. In terms of assembly, heterohexadecamer of 8 large chains and 8 small chains; disulfide-linked. The disulfide link is formed within the large subunit homodimers. The cofactor is Mg(2+). Post-translationally, the disulfide bond which can form in the large chain dimeric partners within the hexadecamer appears to be associated with oxidative stress and protein turnover.

It localises to the plastid. Its subcellular location is the chloroplast. The enzyme catalyses 2 (2R)-3-phosphoglycerate + 2 H(+) = D-ribulose 1,5-bisphosphate + CO2 + H2O. It carries out the reaction D-ribulose 1,5-bisphosphate + O2 = 2-phosphoglycolate + (2R)-3-phosphoglycerate + 2 H(+). In terms of biological role, ruBisCO catalyzes two reactions: the carboxylation of D-ribulose 1,5-bisphosphate, the primary event in carbon dioxide fixation, as well as the oxidative fragmentation of the pentose substrate in the photorespiration process. Both reactions occur simultaneously and in competition at the same active site. This chain is Ribulose bisphosphate carboxylase large chain, found in Corylus cornuta (Beaked hazel).